Reading from the N-terminus, the 195-residue chain is Inhibitor of glycogen debranching 1 (195 aa).

Residues 1–18 (MTDPHLNTPQVSTSPTFE) show a composition bias toward polar residues. Positions 1-101 (MTDPHLNTPQ…ERRSSGPMDF (101 aa)) are disordered. The residue at position 64 (serine 64) is a Phosphoserine. Residue threonine 65 is modified to Phosphothreonine. The segment covering 75–95 (EQARERESSIGEHAPGAERRS) has biased composition (basic and acidic residues). A phosphoserine mark is found at serine 95 and serine 96. Threonine 132 carries the post-translational modification Phosphothreonine. The interval 146–175 (NSYLDNNSNGNSARVPHGSPPQLGTRRKSS) is disordered. Over residues 148-157 (YLDNNSNGNS) the composition is skewed to polar residues. Serine 164 carries the post-translational modification Phosphoserine.

As to quaternary structure, interacts with GDB1.

The protein resides in the cytoplasm. Its function is as follows. Acts as an inhibitor of GDB1, enhancing the ability of cells to store glucose as glycogen. This is Inhibitor of glycogen debranching 1 (IGD1) from Saccharomyces cerevisiae (strain ATCC 204508 / S288c) (Baker's yeast).